The chain runs to 426 residues: Protein FAM181B (426 aa).

Disordered stretches follow at residues 106-157 (GLMG…AAAA) and 226-246 (NLPP…CGPS). The span at 128-141 (PLAAPSAPTVAAPA) shows a compositional bias: low complexity.

It belongs to the FAM181 family.

This chain is Protein FAM181B (FAM181B), found in Homo sapiens (Human).